The chain runs to 93 residues: Pyrimidine/purine nucleoside phosphorylase (93 aa).

Belongs to the nucleoside phosphorylase PpnP family.

The catalysed reaction is a purine D-ribonucleoside + phosphate = a purine nucleobase + alpha-D-ribose 1-phosphate. The enzyme catalyses adenosine + phosphate = alpha-D-ribose 1-phosphate + adenine. It carries out the reaction cytidine + phosphate = cytosine + alpha-D-ribose 1-phosphate. It catalyses the reaction guanosine + phosphate = alpha-D-ribose 1-phosphate + guanine. The catalysed reaction is inosine + phosphate = alpha-D-ribose 1-phosphate + hypoxanthine. The enzyme catalyses thymidine + phosphate = 2-deoxy-alpha-D-ribose 1-phosphate + thymine. It carries out the reaction uridine + phosphate = alpha-D-ribose 1-phosphate + uracil. It catalyses the reaction xanthosine + phosphate = alpha-D-ribose 1-phosphate + xanthine. Functionally, catalyzes the phosphorolysis of diverse nucleosides, yielding D-ribose 1-phosphate and the respective free bases. Can use uridine, adenosine, guanosine, cytidine, thymidine, inosine and xanthosine as substrates. Also catalyzes the reverse reactions. The chain is Pyrimidine/purine nucleoside phosphorylase from Sorangium cellulosum (strain So ce56) (Polyangium cellulosum (strain So ce56)).